The primary structure comprises 326 residues: Apoptosis facilitator Bcl-2-like protein 14 (326 aa).

S44 is modified (phosphoserine). Residues 100 to 147 are disordered; that stretch reads AEKEEDSQSSPPEICAQAQRSGVPQARPRSPKWPRSRSSMDQRLEHKA. A compositionally biased stretch (basic and acidic residues) spans 137–147; the sequence is SSMDQRLEHKA. The short motif at 211-225 is the BH3 element; it reads IVELLKYSGEQLERE. Residues 307-314 carry the BH2 motif; the sequence is WIQQHGGW.

This sequence belongs to the Bcl-2 family. Phosphorylated by MELK, leading to inhibit its pro-apoptotic function.

Its subcellular location is the cytoplasm. In terms of biological role, plays a role in apoptosis. This is Apoptosis facilitator Bcl-2-like protein 14 (BCL2L14) from Bos taurus (Bovine).